We begin with the raw amino-acid sequence, 251 residues long: MESYSVKMDAFEGPLDLLLHLIGKLEIDLYDISVSIVTDQYVSYIRAMQHLELDVASEYLVMAATLLQLKSKQLLPVEQTDFEDVPDFEEDPTREGLIQQLIEYKAYKEAALVLKEKEEARLELFSKQPEDLMTYLDPDNQDFSGNLSFSDLLRAYEKMRQRVAWKVRRSKTVKREERTLEQQMIHVSEYVFANEGTTFFGFFTEQPTVEELVVSFLAVLELVKQCVVACEQMSDDILLRALVKEENQIGV.

Belongs to the ScpA family. Component of a cohesin-like complex composed of ScpA, ScpB and the Smc homodimer, in which ScpA and ScpB bind to the head domain of Smc. The presence of the three proteins is required for the association of the complex with DNA.

The protein resides in the cytoplasm. Participates in chromosomal partition during cell division. May act via the formation of a condensin-like complex containing Smc and ScpB that pull DNA away from mid-cell into both cell halves. The polypeptide is Segregation and condensation protein A (Exiguobacterium sibiricum (strain DSM 17290 / CCUG 55495 / CIP 109462 / JCM 13490 / 255-15)).